Reading from the N-terminus, the 257-residue chain is Na(+)-translocating NADH-quinone reductase subunit C (257 aa).

A helical membrane pass occupies residues 12 to 32 (LFVVIALSLVCSIIVSAAAVG). T225 bears the FMN phosphoryl threonine mark.

Belongs to the NqrC family. As to quaternary structure, composed of six subunits; NqrA, NqrB, NqrC, NqrD, NqrE and NqrF. Requires FMN as cofactor.

The protein resides in the cell inner membrane. It carries out the reaction a ubiquinone + n Na(+)(in) + NADH + H(+) = a ubiquinol + n Na(+)(out) + NAD(+). NQR complex catalyzes the reduction of ubiquinone-1 to ubiquinol by two successive reactions, coupled with the transport of Na(+) ions from the cytoplasm to the periplasm. NqrA to NqrE are probably involved in the second step, the conversion of ubisemiquinone to ubiquinol. The sequence is that of Na(+)-translocating NADH-quinone reductase subunit C from Vibrio cholerae serotype O1 (strain ATCC 39541 / Classical Ogawa 395 / O395).